A 58-amino-acid polypeptide reads, in one-letter code: Small ribosomal subunit protein bS21 (58 aa).

Over residues 31-42 the composition is skewed to basic and acidic residues; it reads EIRKREHYEKPS. Residues 31–58 are disordered; the sequence is EIRKREHYEKPSVKRKKKSEAARKRKYN. A compositionally biased stretch (basic residues) spans 43 to 58; the sequence is VKRKKKSEAARKRKYN.

The protein belongs to the bacterial ribosomal protein bS21 family.

The chain is Small ribosomal subunit protein bS21 from Agathobacter rectalis (strain ATCC 33656 / DSM 3377 / JCM 17463 / KCTC 5835 / VPI 0990) (Eubacterium rectale).